A 263-amino-acid chain; its full sequence is Complement control protein C3 (263 aa).

A signal peptide spans 1–19 (MKVESVTFLTLLGIGCVLS). 4 consecutive Sushi domains span residues 20 to 83 (CCTI…QCIK), 84 to 145 (RRCP…ICES), 146 to 203 (VKCQ…TCQI), and 204 to 263 (VKCP…KCVR). Intrachain disulfides connect Cys-21/Cys-70, Cys-54/Cys-81, Cys-86/Cys-126, Cys-112/Cys-143, Cys-148/Cys-190, Cys-176/Cys-201, Cys-206/Cys-248, and Cys-234/Cys-261.

This sequence belongs to the receptors of complement activation (RCA) family. In terms of assembly, heterodimer with A56 protein; disulfide-linked.

The protein resides in the virion membrane. It is found in the host cell membrane. The protein localises to the secreted. Its function is as follows. Serves to protect the virus against complement attack by inhibiting both classical and alternative pathways of complement activation. Binds C3b and C4b. In Vaccinia virus (strain Copenhagen) (VACV), this protein is Complement control protein C3.